Here is a 445-residue protein sequence, read N- to C-terminus: Nuclear envelope integral membrane protein 1 (445 aa).

An N-terminal signal peptide occupies residues 1–44; that stretch reads MAGGMKVAVLPAVGAGPWSWGAGGCGAVRLLLVLFGCFVCGSAG. Asparagine 125 is a glycosylation site (N-linked (GlcNAc...) asparagine). 5 consecutive transmembrane segments (helical) span residues 161-181, 186-206, 216-236, 245-265, and 289-309; these read PKLFLIFLLGLTLFFCGDLLS, FYYSTGMSVGIVASLLIIIFI, PIYIILVGGWSFSLYLIQLVF, CYWQYLLSYVLAVGFMSFAVC, and LCFMYSSIQIPHIALAIVVIA. Residues 186 to 297 form an a; required for its colocalization with lamins at the nuclear envelope region; that stretch reads FYYSTGMSVG…GLCFMYSSIQ (112 aa). Residues 336-405 form a b; required for interaction with RAN-GTP region; sequence TVPPRLLTEE…LTPNEVSVHE (70 aa). Residues 336-445 are required for nuclear localization; that stretch reads TVPPRLLTEE…LVVQQNSFLT (110 aa). Serine 368, serine 424, and serine 425 each carry phosphoserine. The segment covering 418–430 has biased composition (acidic residues); that stretch reads ELSEETSSEEEDS. The segment at 418 to 445 is disordered; that stretch reads ELSEETSSEEEDSDSRYPLVVQQNSFLT.

Belongs to the NEMP family. Homooligomer. Interacts with RAN-GTP. Interacts with EMD. In terms of processing, phosphorylation may regulate its interaction with RAN-GTP.

Its subcellular location is the nucleus inner membrane. The protein resides in the nucleus envelope. Its function is as follows. Together with EMD, contributes to nuclear envelope stiffness in germ cells. Required for female fertility. Essential for normal erythropoiesis. Required for efficient nuclear envelope opening and enucleation during the late stages of erythroblast maturation. This chain is Nuclear envelope integral membrane protein 1 (NEMP1), found in Bos taurus (Bovine).